Consider the following 597-residue polypeptide: Elongation factor 4 (597 aa).

In terms of domain architecture, tr-type G spans 2 to 184; that stretch reads QNIRNFSIIA…DIVKKIPAPE (183 aa). GTP is bound by residues 14–19 and 131–134; these read DHGKST and NKID.

Belongs to the TRAFAC class translation factor GTPase superfamily. Classic translation factor GTPase family. LepA subfamily.

Its subcellular location is the cell inner membrane. It catalyses the reaction GTP + H2O = GDP + phosphate + H(+). Required for accurate and efficient protein synthesis under certain stress conditions. May act as a fidelity factor of the translation reaction, by catalyzing a one-codon backward translocation of tRNAs on improperly translocated ribosomes. Back-translocation proceeds from a post-translocation (POST) complex to a pre-translocation (PRE) complex, thus giving elongation factor G a second chance to translocate the tRNAs correctly. Binds to ribosomes in a GTP-dependent manner. In Haemophilus ducreyi (strain 35000HP / ATCC 700724), this protein is Elongation factor 4.